We begin with the raw amino-acid sequence, 619 residues long: ETS-related transcription factor Elf-1 (619 aa).

Residues Ser110, Ser163, Ser167, and Ser168 each carry the phosphoserine modification. The interval 158-199 (EKYADSPGASSPEQPKRKKGRKTKPPRPDSPATTPNISVKKK) is disordered. Residues 173–182 (KRKKGRKTKP) show a composition bias toward basic residues. Ser187 carries the phosphoserine modification. Position 190 is a phosphothreonine (Thr190). A DNA-binding region (ETS) is located at residues 208 to 290 (IYLWEFLLAL…EGQRLVYQFK (83 aa)). The tract at residues 300 to 366 (NDEDPSSSIE…DPVEVAQPSE (67 aa)) is disordered. The segment covering 305 to 321 (SSSIESSDPSLSSSATS) has biased composition (low complexity). Residues 322-335 (NRNQTSRSRVSSSP) are compositionally biased toward polar residues. Ser432 is subject to Phosphoserine. The disordered stretch occupies residues 564–592 (TLTQEVEKKESEDHLKENTEKTEQQPQPY). A compositionally biased stretch (basic and acidic residues) spans 568 to 586 (EVEKKESEDHLKENTEKTE).

Belongs to the ETS family. In terms of assembly, binds to the underphosphorylated form of RB. May interact with other transcription factors in order to regulate specific genes. Interacts with RUNX1. As to expression, in fetal tissues, it is highly expressed in heart, lung liver and kidney, and weakly expressed in brain. In adult, it is highly expressed in pancreas, spleen, thymus and peripheral blood leukocytes, expressed at moderate levels in heart, placenta, lung, liver, skeletal muscle, kidney, prostate, ovary, small intestine and colon, and weakly expressed in brain and testis.

The protein localises to the nucleus. Transcription factor that activates the LYN and BLK promoters. Appears to be required for the T-cell-receptor-mediated trans activation of HIV-2 gene expression. Binds specifically to two purine-rich motifs in the HIV-2 enhancer. This chain is ETS-related transcription factor Elf-1 (ELF1), found in Homo sapiens (Human).